The sequence spans 2099 residues: Dedicator of cytokinesis protein 8 (2099 aa).

Residues serine 20, serine 139, and serine 451 each carry the phosphoserine modification. The C2 DOCK-type domain occupies 560–729 (RNLLYVYPQR…GVFNIEVQAV (170 aa)). Phosphoserine is present on residues serine 904, serine 936, serine 1145, and serine 1243. Residues 1632 to 2066 (KSYQASPDLR…LRPMIERKIP (435 aa)) form the DOCKER domain. A Phosphoserine modification is found at serine 2087.

The protein belongs to the DOCK family. In terms of assembly, interacts (via DOCKER domain) with GTPase CDC42; the interaction activates CDC42 by exchanging GDP for GTP. The unphosphorylated form interacts (via DOCKER domain) with LRCH1 (via LRR repeats); the interaction prevents the association between DOCK8 and CDC42. Interacts with CCDC88B. In terms of processing, in response to chemokine CXCL12/SDF-1-alpha stimulation, phosphorylated by PRKCA/PKC-alpha which promotes DOCK8 dissociation from LRCH1. In terms of tissue distribution, expressed in peripheral blood mononuclear cells (PBMCs).

It is found in the cytoplasm. It localises to the cell membrane. The protein localises to the cell projection. The protein resides in the lamellipodium membrane. Guanine nucleotide exchange factor (GEF) which specifically activates small GTPase CDC42 by exchanging bound GDP for free GTP. During immune responses, required for interstitial dendritic cell (DC) migration by locally activating CDC42 at the leading edge membrane of DC. Required for CD4(+) T-cell migration in response to chemokine stimulation by promoting CDC42 activation at T cell leading edge membrane. Is involved in NK cell cytotoxicity by controlling polarization of microtubule-organizing center (MTOC), and possibly regulating CCDC88B-mediated lytic granule transport to MTOC during cell killing. This is Dedicator of cytokinesis protein 8 (DOCK8) from Homo sapiens (Human).